An 82-amino-acid chain; its full sequence is ATP synthase subunit c, chloroplastic (82 aa).

A run of 2 helical transmembrane segments spans residues 3–23 (PIISAASVIAAGLAVGLAAIG) and 57–77 (LAFMESLTIYGLVVALSLLFA).

The protein belongs to the ATPase C chain family. F-type ATPases have 2 components, F(1) - the catalytic core - and F(0) - the membrane proton channel. F(1) has five subunits: alpha(3), beta(3), gamma(1), delta(1), epsilon(1). F(0) has four main subunits: a(1), b(1), b'(1) and c(10-14). The alpha and beta chains form an alternating ring which encloses part of the gamma chain. F(1) is attached to F(0) by a central stalk formed by the gamma and epsilon chains, while a peripheral stalk is formed by the delta, b and b' chains.

The protein resides in the plastid. The protein localises to the chloroplast thylakoid membrane. F(1)F(0) ATP synthase produces ATP from ADP in the presence of a proton or sodium gradient. F-type ATPases consist of two structural domains, F(1) containing the extramembraneous catalytic core and F(0) containing the membrane proton channel, linked together by a central stalk and a peripheral stalk. During catalysis, ATP synthesis in the catalytic domain of F(1) is coupled via a rotary mechanism of the central stalk subunits to proton translocation. In terms of biological role, key component of the F(0) channel; it plays a direct role in translocation across the membrane. A homomeric c-ring of between 10-14 subunits forms the central stalk rotor element with the F(1) delta and epsilon subunits. This Cyanidium caldarium (Red alga) protein is ATP synthase subunit c, chloroplastic.